The chain runs to 357 residues: S-adenosylmethionine:tRNA ribosyltransferase-isomerase (357 aa).

This sequence belongs to the QueA family. As to quaternary structure, monomer.

It localises to the cytoplasm. The catalysed reaction is 7-aminomethyl-7-carbaguanosine(34) in tRNA + S-adenosyl-L-methionine = epoxyqueuosine(34) in tRNA + adenine + L-methionine + 2 H(+). The protein operates within tRNA modification; tRNA-queuosine biosynthesis. In terms of biological role, transfers and isomerizes the ribose moiety from AdoMet to the 7-aminomethyl group of 7-deazaguanine (preQ1-tRNA) to give epoxyqueuosine (oQ-tRNA). This chain is S-adenosylmethionine:tRNA ribosyltransferase-isomerase, found in Buchnera aphidicola subsp. Acyrthosiphon pisum (strain Tuc7).